We begin with the raw amino-acid sequence, 319 residues long: Malate dehydrogenase (319 aa).

Residues 10–15 and aspartate 34 each bind NAD(+); that span reads GAGNIG. The substrate site is built by arginine 83 and arginine 89. NAD(+) contacts are provided by residues asparagine 96 and 119 to 121; that span reads ITN. Residues asparagine 121 and arginine 152 each contribute to the substrate site. Histidine 176 serves as the catalytic Proton acceptor.

This sequence belongs to the LDH/MDH superfamily. MDH type 3 family.

The enzyme catalyses (S)-malate + NAD(+) = oxaloacetate + NADH + H(+). In terms of biological role, catalyzes the reversible oxidation of malate to oxaloacetate. This chain is Malate dehydrogenase, found in Francisella philomiragia subsp. philomiragia (strain ATCC 25017 / CCUG 19701 / FSC 153 / O#319-036).